Consider the following 766-residue polypeptide: Exocyst complex component 6 (766 aa).

Positions 28-90 (NTKQIGDQLE…SLDTSLRQIS (63 aa)) form a coiled coil.

The protein belongs to the SEC15 family. As to quaternary structure, the exocyst complex is composed of Sec3/Exoc1, Sec5/Exoc2, Sec6/Exoc3, Sec8/Exoc4, Sec10/Exoc5, Sec15/Exoc6, Exo70/Exoc7 and Exo84/Exoc8. Interacts with RAB3, RAB8, RAB11 and RAB27. As to expression, detected in developing rhabdomeres in photoreceptor cells.

It is found in the cell projection. Its subcellular location is the rhabdomere. Its function is as follows. Component of the exocyst complex involved in the docking of exocytic vesicles with fusion sites on the plasma membrane. The sequence is that of Exocyst complex component 6 from Drosophila melanogaster (Fruit fly).